We begin with the raw amino-acid sequence, 108 residues long: Holo-[acyl-carrier-protein] synthase (108 aa).

Residues Asp9 and Glu54 each contribute to the Mg(2+) site.

The protein belongs to the P-Pant transferase superfamily. AcpS family. Requires Mg(2+) as cofactor.

Its subcellular location is the cytoplasm. It carries out the reaction apo-[ACP] + CoA = holo-[ACP] + adenosine 3',5'-bisphosphate + H(+). In terms of biological role, transfers the 4'-phosphopantetheine moiety from coenzyme A to a Ser of acyl-carrier-protein. The sequence is that of Holo-[acyl-carrier-protein] synthase from Mycoplasmopsis pulmonis (strain UAB CTIP) (Mycoplasma pulmonis).